The following is a 214-amino-acid chain: ER lumen protein-retaining receptor 3 (214 aa).

Residues Met-1–Phe-4 lie on the Lumenal side of the membrane. Residues Arg-5–Trp-24 traverse the membrane as a helical segment. Residues Arg-25–Ile-32 are Cytoplasmic-facing. The helical transmembrane segment at Ser-33–Phe-52 threads the bilayer. Residues Arg-47 to Tyr-48 are interaction with the K-D-E-L motif on target proteins. Residues Ser-53–Ile-58 are Lumenal-facing. The chain crosses the membrane as a helical span at residues Tyr-59–Tyr-79. Over Trp-80–Thr-92 the chain is Cytoplasmic. The helical transmembrane segment at Phe-93–Asn-110 threads the bilayer. The Lumenal portion of the chain corresponds to Tyr-111–Met-116. The helical transmembrane segment at Glu-117–Leu-135 threads the bilayer. Residues Phe-136–Thr-149 are Cytoplasmic-facing. The helical transmembrane segment at His-150–Arg-168 threads the bilayer. The interval Arg-159–Arg-169 is interaction with the K-D-E-L motif on target proteins. Residues Arg-169 to Gln-178 are Lumenal-facing. The helical transmembrane segment at Ile-179–Val-199 threads the bilayer. Residues Thr-200–Val-214 lie on the Cytoplasmic side of the membrane. The tract at residues Lys-204–Lys-207 is important for recycling of cargo proteins with the sequence motif K-D-E-L from the Golgi to the endoplasmic reticulum.

This sequence belongs to the ERD2 family.

The protein resides in the endoplasmic reticulum membrane. The protein localises to the golgi apparatus membrane. It is found in the cytoplasmic vesicle. It localises to the COPI-coated vesicle membrane. Functionally, receptor for the C-terminal sequence motif K-D-E-L that is present on endoplasmic reticulum resident proteins and that mediates their recycling from the Golgi back to the endoplasmic reticulum. This Mus musculus (Mouse) protein is ER lumen protein-retaining receptor 3 (Kdelr3).